The primary structure comprises 291 residues: UDP-N-acetylenolpyruvoylglucosamine reductase (291 aa).

The FAD-binding PCMH-type domain occupies G19–G186. Residue R165 is part of the active site. The active-site Proton donor is the S215. The active site involves E285.

The protein belongs to the MurB family. Requires FAD as cofactor.

The protein localises to the cytoplasm. The catalysed reaction is UDP-N-acetyl-alpha-D-muramate + NADP(+) = UDP-N-acetyl-3-O-(1-carboxyvinyl)-alpha-D-glucosamine + NADPH + H(+). It participates in cell wall biogenesis; peptidoglycan biosynthesis. In terms of biological role, cell wall formation. The polypeptide is UDP-N-acetylenolpyruvoylglucosamine reductase (Prochlorococcus marinus (strain NATL2A)).